Consider the following 495-residue polypeptide: Cytochrome P450 monooxygenase 64 (495 aa).

A helical membrane pass occupies residues 2–22 (FLQIVTSVLATGLLYALISVL). N-linked (GlcNAc...) asparagine glycosylation is found at N25 and N198. Residue C428 participates in heme binding.

Belongs to the cytochrome P450 family. Requires heme as cofactor.

The protein localises to the membrane. Its pathway is secondary metabolite biosynthesis. In terms of biological role, cytochrome P450 monooxygenase that is able to use 4-ethoxybenzoic acid as a substrate for oxidation. This is Cytochrome P450 monooxygenase 64 from Postia placenta (strain ATCC 44394 / Madison 698-R) (Brown rot fungus).